Consider the following 453-residue polypeptide: Phosphoglucosamine mutase (453 aa).

Serine 100 (phosphoserine intermediate) is an active-site residue. Mg(2+)-binding residues include serine 100, aspartate 239, aspartate 241, and aspartate 243. Phosphoserine is present on serine 100.

The protein belongs to the phosphohexose mutase family. The cofactor is Mg(2+). In terms of processing, activated by phosphorylation.

It carries out the reaction alpha-D-glucosamine 1-phosphate = D-glucosamine 6-phosphate. Its function is as follows. Catalyzes the conversion of glucosamine-6-phosphate to glucosamine-1-phosphate. This is Phosphoglucosamine mutase from Buchnera aphidicola subsp. Baizongia pistaciae (strain Bp).